A 271-amino-acid polypeptide reads, in one-letter code: Co-chaperone protein DjlA (271 aa).

Residues 1–6 (MQYWGK) lie on the Periplasmic side of the membrane. A helical membrane pass occupies residues 7–31 (IIGVAVALIMGGGFWGVVLGLLIGH). The Cytoplasmic segment spans residues 32-271 (MFDKARSRKM…ELIKQQKGFK (240 aa)). Residues 205–271 (DACNVLGVKP…ELIKQQKGFK (67 aa)) form the J domain.

Homodimer.

It is found in the cell inner membrane. Functionally, regulatory DnaK co-chaperone. Direct interaction between DnaK and DjlA is needed for the induction of the wcaABCDE operon, involved in the synthesis of a colanic acid polysaccharide capsule, possibly through activation of the RcsB/RcsC phosphotransfer signaling pathway. The colanic acid capsule may help the bacterium survive conditions outside the host. This chain is Co-chaperone protein DjlA, found in Escherichia coli O6:H1 (strain CFT073 / ATCC 700928 / UPEC).